The chain runs to 932 residues: Valine--tRNA ligase (932 aa).

The 'HIGH' region motif lies at 75-85 (PNVTGQLHMGH). The short motif at 568-572 (KMSKS) is the 'KMSKS' region element. K571 serves as a coordination point for ATP. Positions 863–929 (TVDVAAERKR…ERITARLEGL (67 aa)) form a coiled coil.

It belongs to the class-I aminoacyl-tRNA synthetase family. ValS type 1 subfamily. As to quaternary structure, monomer.

It is found in the cytoplasm. It carries out the reaction tRNA(Val) + L-valine + ATP = L-valyl-tRNA(Val) + AMP + diphosphate. Catalyzes the attachment of valine to tRNA(Val). As ValRS can inadvertently accommodate and process structurally similar amino acids such as threonine, to avoid such errors, it has a 'posttransfer' editing activity that hydrolyzes mischarged Thr-tRNA(Val) in a tRNA-dependent manner. In Corynebacterium jeikeium (strain K411), this protein is Valine--tRNA ligase.